The sequence spans 362 residues: Putative gustatory receptor 89a (362 aa).

The Cytoplasmic segment spans residues 1 to 38 (MLRFPHVCGLCLLLKYWQILALAPFRTSEPMVARCQRW). A helical membrane pass occupies residues 39–59 (MTLIAVFRWLLLTSMAPFVLW). The Extracellular portion of the chain corresponds to 60 to 74 (KSAAMYEATNVRHSM). Residues 75–95 (VFKTIALATMTGDVCISLALL) traverse the membrane as a helical segment. At 96 to 126 (GNHLWNRRELANLVNDLARLHRRRRLSWWST) the chain is on the cytoplasmic side. A helical membrane pass occupies residues 127–147 (LFLWLKLLLSLYDLLCSVPFL). Topologically, residues 148 to 166 (KGAGGRLPWSQLVAYGVQL) are extracellular. Residues 167 to 187 (YFQHVASVYGNGIFGGILLML) traverse the membrane as a helical segment. The Cytoplasmic segment spans residues 188-223 (ECYNQLEREEPTNLARLLQKEYSWLRLIQRFVKLFQ). Residues 224-244 (LGIFLLVLGSFVNIMVNIYAF) form a helical membrane-spanning segment. Residues 245-255 (MSYYVSLHGVP) are Extracellular-facing. A helical transmembrane segment spans residues 256 to 276 (LTISNNCLVLAIQLYAVILAA). At 277–333 (HLCQVRSAKLRKKCLQLEYVPEGLTQEQAMASTPFPVLTPTGNVKFRILGVFILDNS) the chain is on the cytoplasmic side. The helical transmembrane segment at 334–354 (FWLFLVSYAMNFIVVILQTSF) threads the bilayer. The Extracellular segment spans residues 355-362 (EHINHGEI).

The protein belongs to the insect chemoreceptor superfamily. Gustatory receptor (GR) family. Gr77a subfamily.

The protein localises to the cell membrane. Functionally, probable gustatory receptor which mediates acceptance or avoidance behavior, depending on its substrates. The polypeptide is Putative gustatory receptor 89a (Gr89a) (Drosophila melanogaster (Fruit fly)).